The following is a 670-amino-acid chain: DNA ligase (670 aa).

NAD(+) is bound by residues 33–37 (DAEFD), 82–83 (SL), and E113. The active-site N6-AMP-lysine intermediate is K115. NAD(+) contacts are provided by R136, E170, K285, and K309. Positions 403, 406, 421, and 427 each coordinate Zn(2+). Residues 587–670 (EQNLYLSGKT…EVLKAGDNNG (84 aa)) enclose the BRCT domain.

This sequence belongs to the NAD-dependent DNA ligase family. LigA subfamily. Mg(2+) is required as a cofactor. Mn(2+) serves as cofactor.

The catalysed reaction is NAD(+) + (deoxyribonucleotide)n-3'-hydroxyl + 5'-phospho-(deoxyribonucleotide)m = (deoxyribonucleotide)n+m + AMP + beta-nicotinamide D-nucleotide.. Functionally, DNA ligase that catalyzes the formation of phosphodiester linkages between 5'-phosphoryl and 3'-hydroxyl groups in double-stranded DNA using NAD as a coenzyme and as the energy source for the reaction. It is essential for DNA replication and repair of damaged DNA. The polypeptide is DNA ligase (Halothermothrix orenii (strain H 168 / OCM 544 / DSM 9562)).